Consider the following 368-residue polypeptide: Probable protein phosphatase 2C 58 (368 aa).

In terms of domain architecture, PPM-type phosphatase spans Lys-23–Phe-329. Positions 57, 58, 272, and 320 each coordinate Mn(2+). The segment at Asn-336–Ser-368 is disordered. Over residues His-356–Ser-368 the composition is skewed to basic and acidic residues.

Belongs to the PP2C family. Mg(2+) is required as a cofactor. It depends on Mn(2+) as a cofactor.

It carries out the reaction O-phospho-L-seryl-[protein] + H2O = L-seryl-[protein] + phosphate. It catalyses the reaction O-phospho-L-threonyl-[protein] + H2O = L-threonyl-[protein] + phosphate. The chain is Probable protein phosphatase 2C 58 from Oryza sativa subsp. japonica (Rice).